We begin with the raw amino-acid sequence, 216 residues long: Maintenance of carboxysome distribution protein A (216 aa).

G18, G19, G21, K22, T23, T24, and Q47 together coordinate ATP. T23 is a Mg(2+) binding site.

This sequence belongs to the ParA family. McdA subfamily. As to quaternary structure, homodimerizes in the presence of ATP. Each subunit binds 1 ATP molecule; some residues cross the dimer interface to contact ATP in the other subunit. Forms a complex with McdB.

Its subcellular location is the cytoplasm. The protein localises to the nucleoid. It carries out the reaction ATP + H2O = ADP + phosphate + H(+). In terms of biological role, mcdA and McdB together mediate carboxysome (Cb) spacing, size, ultrastructure and probably inheritance in the cell, together they prevent Cb aggregation. McdA is an ATPase that forms dynamic gradients on the nucleoid in response to adapter protein McdB, which associates with carboxysomes. The interplay between McdA gradients on the nucleoid and McdB-bound carboxysomes result in the equal spacing of Cbs along the cell length. Incorrect positioning (aggregation) of carboxysomes results in reduced CO(2) fixation by encapsulated ribulose-1,5-bisphosphate carboxylase (RuBisCO, cbbL/cbbS), which leads to slower growth. In Gloeobacter kilaueensis (strain ATCC BAA-2537 / CCAP 1431/1 / ULC 316 / JS1), this protein is Maintenance of carboxysome distribution protein A.